We begin with the raw amino-acid sequence, 469 residues long: Squamosa promoter-binding-like protein 3 (469 aa).

A disordered region spans residues 96 to 118 (SAEEHDKNMDKGKSKVDDTGTSR). Over residues 97 to 115 (AEEHDKNMDKGKSKVDDTG) the composition is skewed to basic and acidic residues. The segment at 179 to 256 (NPHCQVEGCN…HDHNARRRKP (78 aa)) adopts an SBP-type zinc-finger fold. Cys182, Cys187, Cys204, His207, Cys223, Cys226, His230, and Cys242 together coordinate Zn(2+). Positions 239–255 (KRSCRRRLHDHNARRRK) match the Bipartite nuclear localization signal motif. The interval 446–469 (NDDDEDHLQLPKPSYDNSHYDQMN) is disordered. Residues 460-469 (YDNSHYDQMN) are compositionally biased toward polar residues.

In terms of tissue distribution, ubiquitous.

The protein resides in the nucleus. Functionally, trans-acting factor that binds specifically to the consensus nucleotide sequence 5'-TNCGTACAA-3'. May be involved in panicle development. The polypeptide is Squamosa promoter-binding-like protein 3 (SPL3) (Oryza sativa subsp. indica (Rice)).